A 180-amino-acid polypeptide reads, in one-letter code: Large ribosomal subunit protein uL5 (180 aa).

It belongs to the universal ribosomal protein uL5 family. Part of the 50S ribosomal subunit; part of the 5S rRNA/L5/L18/L25 subcomplex. Contacts the 5S rRNA and the P site tRNA. Forms a bridge to the 30S subunit in the 70S ribosome.

In terms of biological role, this is one of the proteins that bind and probably mediate the attachment of the 5S RNA into the large ribosomal subunit, where it forms part of the central protuberance. In the 70S ribosome it contacts protein S13 of the 30S subunit (bridge B1b), connecting the 2 subunits; this bridge is implicated in subunit movement. Contacts the P site tRNA; the 5S rRNA and some of its associated proteins might help stabilize positioning of ribosome-bound tRNAs. This Chlamydia pneumoniae (Chlamydophila pneumoniae) protein is Large ribosomal subunit protein uL5.